The following is a 360-amino-acid chain: Heat-inducible transcription repressor HrcA (360 aa).

It belongs to the HrcA family.

In terms of biological role, negative regulator of class I heat shock genes (grpE-dnaK-dnaJ and groELS operons). Prevents heat-shock induction of these operons. The chain is Heat-inducible transcription repressor HrcA from Gloeobacter violaceus (strain ATCC 29082 / PCC 7421).